The following is a 132-amino-acid chain: MAPKAEKKPASKAPAEKKPAAKKTSSSVDPSKKRTKARKETYSSYIYKVLKQTHPDTGISQKSMSILNSFVNDIFERIATESSKLAAYNKKSTISAREIQTAVRLILPGELAKHAVSEGTRAVTKYSSSTQA.

Basic and acidic residues predominate over residues 1-19; the sequence is MAPKAEKKPASKAPAEKKP. The tract at residues 1 to 39 is disordered; it reads MAPKAEKKPASKAPAEKKPAAKKTSSSVDPSKKRTKARK. N6-acetyllysine; alternate is present on residues lysine 7 and lysine 8. Glycyl lysine isopeptide (Lys-Gly) (interchain with G-Cter in SUMO); alternate cross-links involve residues lysine 7 and lysine 8. Serine 11 carries the phosphoserine modification. Lysine 12 bears the N6-acetyllysine mark. Lysine 17 is modified (N6-acetyllysine; alternate). A Glycyl lysine isopeptide (Lys-Gly) (interchain with G-Cter in SUMO); alternate cross-link involves residue lysine 17. Residue lysine 18 forms a Glycyl lysine isopeptide (Lys-Gly) (interchain with G-Cter in SUMO) linkage. Residue lysine 125 forms a Glycyl lysine isopeptide (Lys-Gly) (interchain with G-Cter in ubiquitin) linkage.

The protein belongs to the histone H2B family. As to quaternary structure, the nucleosome is a histone octamer containing two molecules each of H2A, H2B, H3 and H4 assembled in one H3-H4 heterotetramer and two H2A-H2B heterodimers. The octamer wraps approximately 147 bp of DNA. Post-translationally, monoubiquitinated by the UBC2-BRE1 complex to form H2BK123ub1. H2BK123ub1 gives a specific tag for epigenetic transcriptional activation and is also prerequisite for H3K4me and H3K79me formation. H2BK123ub1 also modulates the formation of double-strand breaks during meiosis and is a prerequisite for DNA-damage checkpoint activation. Phosphorylated by STE20 to form H2BS10ph during progression through meiotic prophase. May be correlated with chromosome condensation. In terms of processing, acetylated by GCN5 to form H2BK11ac and H2BK16ac. H2BK16ac can also be formed by ESA1. Acetylation of N-terminal lysines and particularly formation of H2BK11acK16ac has a positive effect on transcription. Post-translationally, sumoylation to form H2BK6su or H2BK7su, and probably also H2BK16su or H2BK17su, occurs preferentially near the telomeres and represses gene transcription.

The protein localises to the nucleus. The protein resides in the chromosome. In terms of biological role, core component of nucleosome. Nucleosomes wrap and compact DNA into chromatin, limiting DNA accessibility to the cellular machineries which require DNA as a template. Histones thereby play a central role in transcription regulation, DNA repair, DNA replication and chromosomal stability. DNA accessibility is regulated via a complex set of post-translational modifications of histones, also called histone code, and nucleosome remodeling. This Kluyveromyces lactis (strain ATCC 8585 / CBS 2359 / DSM 70799 / NBRC 1267 / NRRL Y-1140 / WM37) (Yeast) protein is Histone H2B.2 (HTB1).